Consider the following 83-residue polypeptide: Sulfur carrier protein TusA (83 aa).

The active-site Cysteine persulfide intermediate is the Cys-19.

This sequence belongs to the sulfur carrier protein TusA family.

It is found in the cytoplasm. Sulfur carrier protein which probably makes part of a sulfur-relay system. In Aliivibrio salmonicida (strain LFI1238) (Vibrio salmonicida (strain LFI1238)), this protein is Sulfur carrier protein TusA.